The following is a 179-amino-acid chain: uncharacterized protein (179 aa).

The first 19 residues, 1-19, serve as a signal peptide directing secretion; sequence MNTNVFRLLLLGSLFSLSA. Cys20 is lipidated: N-palmitoyl cysteine. Cys20 carries the S-diacylglycerol cysteine lipid modification.

It is found in the cell membrane. This is an uncharacterized protein from Escherichia coli (strain K12).